Consider the following 127-residue polypeptide: Mediator of RNA polymerase II transcription subunit 9 (127 aa).

The stretch at 95–119 (QKEQEIEAKKRVHRQLRQRVEEIAG) forms a coiled coil.

Belongs to the Mediator complex subunit 9 family. As to quaternary structure, component of the Mediator complex.

The protein resides in the nucleus. Its function is as follows. Component of the Mediator complex, a coactivator involved in the regulated transcription of nearly all RNA polymerase II-dependent genes. Mediator functions as a bridge to convey information from gene-specific regulatory proteins to the basal RNA polymerase II transcription machinery. Mediator is recruited to promoters by direct interactions with regulatory proteins and serves as a scaffold for the assembly of a functional preinitiation complex with RNA polymerase II and the general transcription factors. The polypeptide is Mediator of RNA polymerase II transcription subunit 9 (CSE2) (Eremothecium gossypii (strain ATCC 10895 / CBS 109.51 / FGSC 9923 / NRRL Y-1056) (Yeast)).